The following is a 430-amino-acid chain: MEIGLVHYRVGETDGVSLEMVKWKQALRNMHLKTYLIAGDMGTSPGFKIPYIAYTDKRSNILKQKSFVNLDEWDENYFKKEMNKYIEDIYNQLYEMMDLDVMIVNNIFSLAHNPAAAVAIYRFCKDNGIKMIGHHHDFYWERDFYKNPTNDYIKEILEEYFPPKDITHVVINSLAQEELKNKKGLDSIVIPNVFDFNQKRWEIDDYNIKIYDKLNISQKDLIFLQATRIVRRKAIELAIDTVAEVKKDLKKYIGKTTFNGKKITQDTNVFLVLPGLSEESDYVEVLKEYASQKDVELKLAFSISDDIRHEEEEIFSLWDFYAIADFITYPSILEGFGNQFLEAIFAKTPVLMFEYPVYKKDIAPLGFEVVSLGSKAEYERGMYRVNQNEIIKAKEEIFQILFDPQGLHRLSRRILNLGKNIFPMKLWRKS.

Belongs to the glycosyltransferase group 1 family. The cofactor is a divalent metal cation.

The enzyme catalyses (2R)-2-O-(alpha-D-glucopyranosyl)-glycerate + GDP-alpha-D-mannose = (2R)-2-O-[alpha-D-mannopyranosyl-(1-&gt;2)-alpha-D-glucopyranosyl]-glycerate + GDP + H(+). Involved in the biosynthesis of the compatible solute mannosylglucosylglycerate through a nonphosphorylating pathway. Catalyzes the synthesis of mannosylglucosylglycerate (MGG) from glucosylglycerate (GG) and GDP-mannose. This Petrotoga mobilis (strain DSM 10674 / SJ95) protein is Mannosylglucosylglycerate synthase.